Reading from the N-terminus, the 91-residue chain is Early E3B 10.4 kDa protein (91 aa).

Positions 1–22 (MIPRNFFFTILICAFNVCATFT) are cleaved as a signal peptide. The Lumenal segment spans residues 23 to 34 (AVATASPDCIGP). The helical transmembrane segment at 35–60 (FASYALFAFVTCICVCSIVCLVINFF) threads the bilayer. Topologically, residues 61–91 (QLVDWIFVRIAYLRHHPEYRNQNVAALLRLI) are cytoplasmic.

This sequence belongs to the adenoviridae E3B family.

Its subcellular location is the host endoplasmic reticulum membrane. Functionally, down-regulates the EGF receptor. In Homo sapiens (Human), this protein is Early E3B 10.4 kDa protein.